The sequence spans 126 residues: Small ribosomal subunit protein uS12 (126 aa).

Positions 1–23 (MPTISQLVRKGRKTVASKSTAPA) are disordered. D89 carries the post-translational modification 3-methylthioaspartic acid.

Belongs to the universal ribosomal protein uS12 family. In terms of assembly, part of the 30S ribosomal subunit. Contacts proteins S8 and S17. May interact with IF1 in the 30S initiation complex.

Its function is as follows. With S4 and S5 plays an important role in translational accuracy. In terms of biological role, interacts with and stabilizes bases of the 16S rRNA that are involved in tRNA selection in the A site and with the mRNA backbone. Located at the interface of the 30S and 50S subunits, it traverses the body of the 30S subunit contacting proteins on the other side and probably holding the rRNA structure together. The combined cluster of proteins S8, S12 and S17 appears to hold together the shoulder and platform of the 30S subunit. This chain is Small ribosomal subunit protein uS12, found in Clostridium perfringens (strain ATCC 13124 / DSM 756 / JCM 1290 / NCIMB 6125 / NCTC 8237 / Type A).